Consider the following 310-residue polypeptide: tRNA uridine(34) hydroxylase (310 aa).

The 95-residue stretch at 124–218 (SDPEVLLIDT…YFEEVPQEES (95 aa)) folds into the Rhodanese domain. The Cysteine persulfide intermediate role is filled by Cys178.

The protein belongs to the TrhO family.

It carries out the reaction uridine(34) in tRNA + AH2 + O2 = 5-hydroxyuridine(34) in tRNA + A + H2O. Its function is as follows. Catalyzes oxygen-dependent 5-hydroxyuridine (ho5U) modification at position 34 in tRNAs. This is tRNA uridine(34) hydroxylase from Pseudomonas putida (strain ATCC 47054 / DSM 6125 / CFBP 8728 / NCIMB 11950 / KT2440).